An 807-amino-acid chain; its full sequence is Glycerol-3-phosphate acyltransferase (807 aa).

An HXXXXD motif motif is present at residues 308–313 (CHRSHM).

It belongs to the GPAT/DAPAT family.

It is found in the cell inner membrane. It catalyses the reaction sn-glycerol 3-phosphate + an acyl-CoA = a 1-acyl-sn-glycero-3-phosphate + CoA. Its pathway is phospholipid metabolism; CDP-diacylglycerol biosynthesis; CDP-diacylglycerol from sn-glycerol 3-phosphate: step 1/3. This is Glycerol-3-phosphate acyltransferase from Shewanella pealeana (strain ATCC 700345 / ANG-SQ1).